The primary structure comprises 1042 residues: Ubiquitin carboxyl-terminal hydrolase 38 (1042 aa).

The USP domain maps to 445–949; it reads TGLINLGNTC…TAYVLLYKKQ (505 aa). Cys454 acts as the Nucleophile in catalysis. His857 functions as the Proton acceptor in the catalytic mechanism.

It belongs to the peptidase C19 family. Interacts with isoform 1 of FBXW7; this interaction prevents FBXW7-mediated degradation of MYC.

It is found in the cytoplasm. The protein resides in the nucleus. It catalyses the reaction Thiol-dependent hydrolysis of ester, thioester, amide, peptide and isopeptide bonds formed by the C-terminal Gly of ubiquitin (a 76-residue protein attached to proteins as an intracellular targeting signal).. Functionally, deubiquitinating enzyme that plays a role in various cellular processes, including DNA repair, cell cycle regulation, and immune response. Plays a role in the inhibition of type I interferon signaling by mediating the 'Lys-33' to 'Lys-48' ubiquitination transition of TBK1 leading to its degradation. Cleaves the ubiquitin chain from the histone demethylase LSD1/KDM1A and prevents it from degradation by the 26S proteasome, thus maintaining LSD1 protein level in cells. Plays a role in the DNA damage response by regulating the deacetylase activity of HDAC1. Mechanistically, removes the 'Lys-63'-linked ubiquitin chain promoting the deacetylase activity of HDAC1 in response to DNA damage. Also acts as a specific deubiquitinase of histone deacetylase 3/HDAC3 and cleaves its 'Lys-63'-linked ubiquitin chains to lower its histone deacetylase activity. Regulates MYC levels and cell proliferation via antagonizing ubiquitin E3 ligase FBXW7 thereby preventing MYC 'Lys-48'-linked ubiquitination and degradation. Participates in antiviral response by removing both 'Lys-48'-linked and 'Lys-63'-linked polyubiquitination of Zika virus envelope protein E. Constitutively associated with IL-33R/IL1RL1, deconjugates its 'Lys-27'-linked polyubiquitination resulting in its autophagic degradation. This is Ubiquitin carboxyl-terminal hydrolase 38 (Usp38) from Mus musculus (Mouse).